The chain runs to 303 residues: Quinolinate synthase (303 aa).

The iminosuccinate site is built by His24 and Ser41. [4Fe-4S] cluster is bound at residue Cys86. Residues 112-114 (YVN) and Ser129 each bind iminosuccinate. Position 172 (Cys172) interacts with [4Fe-4S] cluster. Iminosuccinate-binding positions include 198-200 (HPE) and Thr215. Residue Cys260 coordinates [4Fe-4S] cluster.

Belongs to the quinolinate synthase family. Type 2 subfamily. It depends on [4Fe-4S] cluster as a cofactor.

The protein resides in the cytoplasm. The enzyme catalyses iminosuccinate + dihydroxyacetone phosphate = quinolinate + phosphate + 2 H2O + H(+). The protein operates within cofactor biosynthesis; NAD(+) biosynthesis; quinolinate from iminoaspartate: step 1/1. Catalyzes the condensation of iminoaspartate with dihydroxyacetone phosphate to form quinolinate. The chain is Quinolinate synthase from Clostridium kluyveri (strain NBRC 12016).